A 122-amino-acid chain; its full sequence is Large ribosomal subunit protein uL14 (122 aa).

Belongs to the universal ribosomal protein uL14 family. As to quaternary structure, part of the 50S ribosomal subunit. Forms a cluster with proteins L3 and L19. In the 70S ribosome, L14 and L19 interact and together make contacts with the 16S rRNA in bridges B5 and B8.

In terms of biological role, binds to 23S rRNA. Forms part of two intersubunit bridges in the 70S ribosome. The chain is Large ribosomal subunit protein uL14 from Solidesulfovibrio magneticus (strain ATCC 700980 / DSM 13731 / RS-1) (Desulfovibrio magneticus).